A 354-amino-acid polypeptide reads, in one-letter code: Glutamine synthetase cytosolic isozyme 1-3 (354 aa).

Serine 2 bears the N-acetylserine mark. Phosphoserine occurs at positions 2 and 48. The region spanning 19–99 is the GS beta-grasp domain; that stretch reads IIAEYIWIGG…VMCDAYTPAG (81 aa). In terms of domain architecture, GS catalytic spans 106-354; it reads KRHNAAKIFS…SMIAETTILG (249 aa).

This sequence belongs to the glutamine synthetase family. In terms of assembly, homooctamer. As to expression, expressed in the pericycle in the region of mature root.

The protein resides in the cytoplasm. It catalyses the reaction L-glutamate + NH4(+) + ATP = L-glutamine + ADP + phosphate + H(+). In terms of biological role, low-affinity glutamine synthetase. May contribute to the homeostatic control of glutamine synthesis in roots. This chain is Glutamine synthetase cytosolic isozyme 1-3 (GLN1-3), found in Arabidopsis thaliana (Mouse-ear cress).